A 198-amino-acid chain; its full sequence is Probable nicotinate-nucleotide adenylyltransferase (198 aa).

The protein belongs to the NadD family.

It carries out the reaction nicotinate beta-D-ribonucleotide + ATP + H(+) = deamido-NAD(+) + diphosphate. The protein operates within cofactor biosynthesis; NAD(+) biosynthesis; deamido-NAD(+) from nicotinate D-ribonucleotide: step 1/1. Catalyzes the reversible adenylation of nicotinate mononucleotide (NaMN) to nicotinic acid adenine dinucleotide (NaAD). The sequence is that of Probable nicotinate-nucleotide adenylyltransferase from Albidiferax ferrireducens (strain ATCC BAA-621 / DSM 15236 / T118) (Rhodoferax ferrireducens).